Here is a 331-residue protein sequence, read N- to C-terminus: DNA-directed RNA polymerase subunit alpha (331 aa).

The interval 1 to 232 is alpha N-terminal domain (alpha-NTD); sequence MQGTFRDFLK…DQLSVFVDLE (232 aa). Positions 247-331 are alpha C-terminal domain (alpha-CTD); sequence VDPILLRPID…AGLGEDRVVG (85 aa).

It belongs to the RNA polymerase alpha chain family. As to quaternary structure, homodimer. The RNAP catalytic core consists of 2 alpha, 1 beta, 1 beta' and 1 omega subunit. When a sigma factor is associated with the core the holoenzyme is formed, which can initiate transcription.

It carries out the reaction RNA(n) + a ribonucleoside 5'-triphosphate = RNA(n+1) + diphosphate. DNA-dependent RNA polymerase catalyzes the transcription of DNA into RNA using the four ribonucleoside triphosphates as substrates. In Alkalilimnicola ehrlichii (strain ATCC BAA-1101 / DSM 17681 / MLHE-1), this protein is DNA-directed RNA polymerase subunit alpha.